Here is an 89-residue protein sequence, read N- to C-terminus: MALLQQRKQEIISGYQTHETDTGSADVQVAMLTERINKLSTHLQANSKDHSSRRGLLQMIGRRKRLLAYILKHNPERYRALITRLGIRG.

This sequence belongs to the universal ribosomal protein uS15 family. Part of the 30S ribosomal subunit. Forms a bridge to the 50S subunit in the 70S ribosome, contacting the 23S rRNA.

In terms of biological role, one of the primary rRNA binding proteins, it binds directly to 16S rRNA where it helps nucleate assembly of the platform of the 30S subunit by binding and bridging several RNA helices of the 16S rRNA. Forms an intersubunit bridge (bridge B4) with the 23S rRNA of the 50S subunit in the ribosome. This chain is Small ribosomal subunit protein uS15, found in Cyanothece sp. (strain PCC 7425 / ATCC 29141).